The primary structure comprises 530 residues: Ubiquitin carboxyl-terminal hydrolase 17-like protein 12 (530 aa).

Positions 80 to 375 (AGLQNMGNTC…QAYVLFYIQK (296 aa)) constitute a USP domain. Cys-89 acts as the Nucleophile in catalysis. His-334 acts as the Proton acceptor in catalysis. Composition is skewed to basic and acidic residues over residues 382–392 (SESVSRGREPR) and 398–412 (DTDR…KRDH). 2 disordered regions span residues 382–412 (SESV…KRDH) and 477–530 (NHHP…LVCQ). The span at 484 to 495 (SSLLKLSSTTPT) shows a compositional bias: low complexity. Over residues 496–505 (HQESMNTGTL) the composition is skewed to polar residues. The segment covering 510–524 (GRARRSKGKNKHSKR) has biased composition (basic residues).

It belongs to the peptidase C19 family. USP17 subfamily.

It is found in the nucleus. The protein localises to the endoplasmic reticulum. It catalyses the reaction Thiol-dependent hydrolysis of ester, thioester, amide, peptide and isopeptide bonds formed by the C-terminal Gly of ubiquitin (a 76-residue protein attached to proteins as an intracellular targeting signal).. Functionally, deubiquitinating enzyme that removes conjugated ubiquitin from specific proteins to regulate different cellular processes that may include cell proliferation, progression through the cell cycle, apoptosis, cell migration, and the cellular response to viral infection. This Homo sapiens (Human) protein is Ubiquitin carboxyl-terminal hydrolase 17-like protein 12 (USP17L12).